The chain runs to 749 residues: G-type lectin S-receptor-like serine/threonine-protein kinase At1g61460 (749 aa).

Positions 1–25 (MRITFFASLLLFTNTIFISFSFAIA) are cleaved as a signal peptide. A Bulb-type lectin domain is found at 26–145 (GINKESPLSI…FSGRTLWQSF (120 aa)). Residues 26–392 (GINKESPLSI…ELGGNKRKKT (367 aa)) are Extracellular-facing. 4 N-linked (GlcNAc...) asparagine glycosylation sites follow: Asn-54, Asn-95, Asn-118, and Asn-135. The EGF-like; atypical domain occupies 247–280 (PAHSCDYYGVCGPFGICVKSVCKCFKGFIPKYIE). 2 disulfides stabilise this stretch: Cys-251–Cys-263 and Cys-257–Cys-268. Residues Asn-286, Asn-302, and Asn-341 are each glycosylated (N-linked (GlcNAc...) asparagine). A PAN domain is found at 299–381 (CQENSTKKDA…GEILSIRLAR (83 aa)). 2 cysteine pairs are disulfide-bonded: Cys-334/Cys-355 and Cys-338/Cys-344. The helical transmembrane segment at 393–413 (ITASIVSLSLFLILGSTAFGF) threads the bilayer. The Cytoplasmic segment spans residues 414 to 749 (WRYRVKHNAS…EMTKSVILGR (336 aa)). One can recognise a Protein kinase domain in the interval 454–721 (FSLSNKLGQG…DLPSPKQPTF (268 aa)). ATP is bound by residues 460 to 468 (LGQGGFGSV) and Lys-482. Positions 543–560 (RKRLEIDWPKRFDIIQGI) are caM-binding. Asp-579 serves as the catalytic Proton acceptor.

Belongs to the protein kinase superfamily. Ser/Thr protein kinase family.

The protein resides in the cell membrane. The enzyme catalyses L-seryl-[protein] + ATP = O-phospho-L-seryl-[protein] + ADP + H(+). The catalysed reaction is L-threonyl-[protein] + ATP = O-phospho-L-threonyl-[protein] + ADP + H(+). The sequence is that of G-type lectin S-receptor-like serine/threonine-protein kinase At1g61460 from Arabidopsis thaliana (Mouse-ear cress).